The sequence spans 309 residues: Probable 5-dehydro-4-deoxyglucarate dehydratase (309 aa).

The protein belongs to the DapA family.

It catalyses the reaction 5-dehydro-4-deoxy-D-glucarate + H(+) = 2,5-dioxopentanoate + CO2 + H2O. The protein operates within carbohydrate acid metabolism; D-glucarate degradation; 2,5-dioxopentanoate from D-glucarate: step 2/2. This is Probable 5-dehydro-4-deoxyglucarate dehydratase from Saccharopolyspora erythraea (strain ATCC 11635 / DSM 40517 / JCM 4748 / NBRC 13426 / NCIMB 8594 / NRRL 2338).